The following is a 177-amino-acid chain: Large ribosomal subunit protein eL20 (177 aa).

The protein belongs to the eukaryotic ribosomal protein eL20 family.

This Drosophila melanogaster (Fruit fly) protein is Large ribosomal subunit protein eL20 (RpL18A).